An 814-amino-acid chain; its full sequence is Syn-copalyl diphosphate synthase TPS3, chloroplastic (814 aa).

Residues 1–52 constitute a chloroplast transit peptide; it reads MCSLSTLSPNFSNAYGSKSVSSTASRFPCWQRSNETWKTQSREVIHWTYVVR. K248 lines the substrate pocket. 2 residues coordinate Mg(2+): D386 and D388. The short motif at 386-389 is the DXDD motif element; sequence DIDD. K472 lines the substrate pocket.

This sequence belongs to the terpene synthase family. Mg(2+) serves as cofactor. Mostly expressed in trichomes of leaves and fruits.

It is found in the plastid. Its subcellular location is the chloroplast. It catalyses the reaction (2E,6E,10E)-geranylgeranyl diphosphate = 9alpha-copalyl diphosphate. It functions in the pathway secondary metabolite biosynthesis; terpenoid biosynthesis. Involved in the biosynthesis of labdane-type diterpenoid including cleroda-dienols, and peregrinol lactones and furan derivatives, dopaminergic diterpenoids that can bind to dopamine receptors in the human pituitary gland, have probably ability to lower prolactin levels, and are used to treat menstrual cycle disorders (e.g. premenstrual syndrome and mastodynia). Terpene synthase that produces syn-copalyl diphosophate from geranylgeranyl diphosphate (GGPP). The chain is Syn-copalyl diphosphate synthase TPS3, chloroplastic from Vitex agnus-castus (Chaste tree).